Reading from the N-terminus, the 428-residue chain is 3-phosphoshikimate 1-carboxyvinyltransferase (428 aa).

The 3-phosphoshikimate site is built by K20, S21, and R25. K20 serves as a coordination point for phosphoenolpyruvate. The phosphoenolpyruvate site is built by G92 and R120. 3-phosphoshikimate-binding residues include S166, Q168, D314, and K341. Q168 is a binding site for phosphoenolpyruvate. D314 serves as the catalytic Proton acceptor. 2 residues coordinate phosphoenolpyruvate: R345 and R387.

This sequence belongs to the EPSP synthase family. In terms of assembly, monomer.

Its subcellular location is the cytoplasm. The catalysed reaction is 3-phosphoshikimate + phosphoenolpyruvate = 5-O-(1-carboxyvinyl)-3-phosphoshikimate + phosphate. It participates in metabolic intermediate biosynthesis; chorismate biosynthesis; chorismate from D-erythrose 4-phosphate and phosphoenolpyruvate: step 6/7. Its function is as follows. Catalyzes the transfer of the enolpyruvyl moiety of phosphoenolpyruvate (PEP) to the 5-hydroxyl of shikimate-3-phosphate (S3P) to produce enolpyruvyl shikimate-3-phosphate and inorganic phosphate. The sequence is that of 3-phosphoshikimate 1-carboxyvinyltransferase from Listeria welshimeri serovar 6b (strain ATCC 35897 / DSM 20650 / CCUG 15529 / CIP 8149 / NCTC 11857 / SLCC 5334 / V8).